The sequence spans 126 residues: MNLIAILEQEEIARLTGGNAVTEFAPGDTVVVSVNVVEGTRKRVQAFEGVVIAKRNRGLNSSFIVRKISSGEAVERTFQLYSPQIAGIEVKRRGDVRRAKLYYLRSRSGKSARIKEKLVLKKAKSA.

This sequence belongs to the bacterial ribosomal protein bL19 family.

Its function is as follows. This protein is located at the 30S-50S ribosomal subunit interface and may play a role in the structure and function of the aminoacyl-tRNA binding site. The sequence is that of Large ribosomal subunit protein bL19 from Bordetella bronchiseptica (strain ATCC BAA-588 / NCTC 13252 / RB50) (Alcaligenes bronchisepticus).